A 1112-amino-acid polypeptide reads, in one-letter code: MGFESSSSAASNMKPQPQKSNTAQYSVDAALFADFAQSIYTGKSFNYSKSVISPPNHVPDEHITAYLSNIQRGGLVQPFGCLIAVEEPSFRILGLSDNSSDFLGLLSLPSTSHSGEFDKVKGLIGIDARTLFTPSSGASLSKAASFTEISLLNPVLVHSRTTQKPFYAILHRIDAGIVMDLEPAKSGDPALTLAGAVQSQKLAVRAISRLQSLPGGDIGALCDTVVEDVQRLTGYDRVMVYQFHEDDHGEVVSEIRRSDLEPYLGLHYPATDIPQAARFLFKQNRVRMICDCNATPVKVVQSEELKRPLCLVNSTLRAPHGCHTQYMANMGSVASLALAIVVKGKDSSKLWGLVVGHHCSPRYVPFPLRYACEFLMQAFGLQLQMELQLASQLAEKKAMRTQTLLCDMLLRDTVSAIVTQSPGIMDLVKCDGAALYYKGKCWLVGVTPNESQVKDLVNWLVENHGDDSTGLTTDSLVDAGYPGAISLGDAVCGVAAAGFSSKDYLLWFRSNTASAIKWGGAKHHPKDKDDAGRMHPRSSFTAFLEVAKSRSLPWEISEIDAIHSLRLIMRESFTSSRPVLSGNGVARDANELTSFVCEMVRVIETATAPIFGVDSSGCINGWNKKTAEMTGLLASEAMGKSLADEIVQEESRAALESLLCKALQGEEEKSVMLKLRKFGQNNHPDYSSDVCVLVNSCTSRDYTENIIGVCFVGQDITSEKAITDRFIRLQGDYKTIVQSLNPLIPPIFASDENACCSEWNAAMEKLTGWSKHEVIGKMLPGEVFGVFCKVKCQDSLTKFLISLYQGIAGDNVPESSLVEFFNKEGKYIEASLTANKSTNIEGKVIRCFFFLQIINKESGLSCPELKESAQSLNELTYVRQEIKNPLNGIRFAHKLLESSEISASQRQFLETSDACEKQITTIIESTDLKSIEEGKLQLETEEFRLENILDTIISQVMIILRERNSQLRVEVAEEIKTLPLNGDRVKLQLILADLLRNIVNHAPFPNSWVGISISPGQELSRDNGRYIHLQFRMIHPGKGLPSEMLSDMFETRDGWVTPDGLGLKLSRKLLEQMNGRVSYVREDERCFFQVDLQVKTMLGVESRGTEGSSSIK.

A disordered region spans residues 1–20 (MGFESSSSAASNMKPQPQKS). The GAF domain maps to 217–387 (DIGALCDTVV…AFGLQLQMEL (171 aa)). Cys-322 serves as a coordination point for phytochromobilin. PAS domains follow at residues 595-666 (FVCE…LQGE) and 732-803 (DYKT…LISL). In terms of domain architecture, Histidine kinase spans 877-1096 (YVRQEIKNPL…FFQVDLQVKT (220 aa)).

Belongs to the phytochrome family. In terms of assembly, homodimer. Post-translationally, contains one covalently linked phytochromobilin chromophore.

Its function is as follows. Regulatory photoreceptor which exists in two forms that are reversibly interconvertible by light: the Pr form that absorbs maximally in the red region of the spectrum and the Pfr form that absorbs maximally in the far-red region. Photoconversion of Pr to Pfr induces an array of morphogenic responses, whereas reconversion of Pfr to Pr cancels the induction of those responses. Pfr controls the expression of a number of nuclear genes including those encoding the small subunit of ribulose-bisphosphate carboxylase, chlorophyll A/B binding protein, protochlorophyllide reductase, rRNA, etc. It also controls the expression of its own gene(s) in a negative feedback fashion. This chain is Phytochrome E (PHYE), found in Arabidopsis thaliana (Mouse-ear cress).